Here is a 237-residue protein sequence, read N- to C-terminus: MTKLSVNINKVATLRNARGGNVPNVVKVALDCESFGADGITVHPRPDERHIRRSDVYDLRPLLRTEFNIEGYPSPEFIDLVLKVKPHQVTLVPDDPSQITSNSGWDTKVNFDFLTEVLDEFNGAGIRTSVFVAPDAEMIEYAAKAGADRVELYTEPYATAYPKDPAAAVAPFVEAAKAARRLGIGLNAGHDLSLLNLNYFYKNIPWLDEVSIGHALISDALYLGLERTIQEYKNCLR.

3-amino-2-oxopropyl phosphate contacts are provided by Asn7 and Arg18. His43 acts as the Proton acceptor in catalysis. Residues Arg45 and His50 each coordinate 1-deoxy-D-xylulose 5-phosphate. Glu70 (proton acceptor) is an active-site residue. Residue Thr100 coordinates 1-deoxy-D-xylulose 5-phosphate. His190 acts as the Proton donor in catalysis. 3-amino-2-oxopropyl phosphate-binding positions include Asp191 and 213 to 214 (GH).

It belongs to the PNP synthase family. In terms of assembly, homooctamer; tetramer of dimers.

The protein resides in the cytoplasm. It carries out the reaction 3-amino-2-oxopropyl phosphate + 1-deoxy-D-xylulose 5-phosphate = pyridoxine 5'-phosphate + phosphate + 2 H2O + H(+). It functions in the pathway cofactor biosynthesis; pyridoxine 5'-phosphate biosynthesis; pyridoxine 5'-phosphate from D-erythrose 4-phosphate: step 5/5. In terms of biological role, catalyzes the complicated ring closure reaction between the two acyclic compounds 1-deoxy-D-xylulose-5-phosphate (DXP) and 3-amino-2-oxopropyl phosphate (1-amino-acetone-3-phosphate or AAP) to form pyridoxine 5'-phosphate (PNP) and inorganic phosphate. This Bacteroides fragilis (strain ATCC 25285 / DSM 2151 / CCUG 4856 / JCM 11019 / LMG 10263 / NCTC 9343 / Onslow / VPI 2553 / EN-2) protein is Pyridoxine 5'-phosphate synthase.